The following is a 129-amino-acid chain: Fluoride-specific ion channel FluC 2 (129 aa).

A run of 4 helical transmembrane segments spans residues 3 to 23, 32 to 52, 59 to 79, and 90 to 110; these read FLYV…MNLW, ATLA…RFLA, LVLL…FSAF, and GAWL…LIMV. Residues Gly-71 and Thr-74 each contribute to the Na(+) site.

Belongs to the fluoride channel Fluc/FEX (TC 1.A.43) family.

The protein resides in the cell membrane. The catalysed reaction is fluoride(in) = fluoride(out). With respect to regulation, na(+) is not transported, but it plays an essential structural role and its presence is essential for fluoride channel function. Functionally, fluoride-specific ion channel. Important for reducing fluoride concentration in the cell, thus reducing its toxicity. The sequence is that of Fluoride-specific ion channel FluC 2 from Listeria monocytogenes serovar 1/2a (strain ATCC BAA-679 / EGD-e).